We begin with the raw amino-acid sequence, 443 residues long: D(2) dopamine receptor (443 aa).

Topologically, residues methionine 1–tyrosine 37 are extracellular. N-linked (GlcNAc...) asparagine glycans are attached at residues asparagine 5, asparagine 17, and asparagine 23. The chain crosses the membrane as a helical span at residues alanine 38–serine 60. Topologically, residues arginine 61 to asparagine 70 are cytoplasmic. The chain crosses the membrane as a helical span at residues tyrosine 71–tyrosine 93. The Extracellular portion of the chain corresponds to leucine 94–aspartate 108. A disulfide bond links cysteine 107 and cysteine 182. A helical transmembrane segment spans residues isoleucine 109 to isoleucine 130. The Cytoplasmic portion of the chain corresponds to aspartate 131 to arginine 151. A helical transmembrane segment spans residues valine 152–phenylalanine 172. At glycine 173–alanine 188 the chain is on the extracellular side. The helical transmembrane segment at phenylalanine 189–tyrosine 213 threads the bilayer. The interaction with PPP1R9B stretch occupies residues lysine 211 to glutamine 373. The Cytoplasmic segment spans residues isoleucine 214 to glutamine 373. Positions methionine 281–lysine 332 are disordered. Positions alanine 323 to lysine 332 are enriched in basic and acidic residues. The chain crosses the membrane as a helical span at residues methionine 374–leucine 395. Residues asparagine 396–serine 409 lie on the Extracellular side of the membrane. An intrachain disulfide couples cysteine 399 to cysteine 401. A helical transmembrane segment spans residues alanine 410–isoleucine 431. Residues glutamate 432–cysteine 443 are Cytoplasmic-facing. Cysteine 443 is lipidated: S-palmitoyl cysteine.

The protein belongs to the G-protein coupled receptor 1 family. Forms homo- and heterooligomers with DRD4. The interaction with DRD4 may modulate agonist-induced downstream signaling. Interacts with CADPS and CADPS2. Interacts with GPRASP1, PPP1R9B and CLIC6. Interacts with ARRB2. Interacts with HTR2A. Interacts with GNAI2 isoform sGi2, the interaction allows the creation of an intracellular pool of DRD2 that can be released to cell surface upon agonist stimulation. Interacts with DRD1. Interacts with KCNA2. In terms of processing, palmitoylated. Palmitoylation which is required for proper localization to the plasma membrane and stability of the receptor could be carried on by ZDHHC4, ZDHHC3 and ZDHHC8. As to expression, expressed in the anterior pituitary gland.

The protein resides in the cell membrane. The protein localises to the golgi apparatus membrane. Its function is as follows. Dopamine receptor whose activity is mediated by G proteins which inhibit adenylyl cyclase. Positively regulates postnatal regression of retinal hyaloid vessels via suppression of VEGFR2/KDR activity, downstream of OPN5. This Homo sapiens (Human) protein is D(2) dopamine receptor (DRD2).